The chain runs to 188 residues: Large ribosomal subunit protein eL18 (188 aa).

The disordered stretch occupies residues 153–188; that stretch reads GKAPGTPHSHTKPYIRSKGRKFERARGRRASRGYKN. Composition is skewed to basic residues over residues 161-171 and 178-188; these read SHTKPYIRSKG and RGRRASRGYKN.

The protein belongs to the eukaryotic ribosomal protein eL18 family. Component of the large ribosomal subunit.

It localises to the cytoplasm. The protein localises to the cytosol. The protein resides in the rough endoplasmic reticulum. Its function is as follows. Component of the large ribosomal subunit. The ribosome is a large ribonucleoprotein complex responsible for the synthesis of proteins in the cell. In Ictalurus punctatus (Channel catfish), this protein is Large ribosomal subunit protein eL18 (rpl18).